The following is a 514-amino-acid chain: Cobyric acid synthase (514 aa).

Positions 249–448 constitute a GATase cobBQ-type domain; it reads LIDIAVIKLP…VHGVFDNDEI (200 aa). Cys-330 functions as the Nucleophile in the catalytic mechanism. His-440 is an active-site residue.

It belongs to the CobB/CobQ family. CobQ subfamily.

It functions in the pathway cofactor biosynthesis; adenosylcobalamin biosynthesis. Catalyzes amidations at positions B, D, E, and G on adenosylcobyrinic A,C-diamide. NH(2) groups are provided by glutamine, and one molecule of ATP is hydrogenolyzed for each amidation. This Ruminiclostridium cellulolyticum (strain ATCC 35319 / DSM 5812 / JCM 6584 / H10) (Clostridium cellulolyticum) protein is Cobyric acid synthase.